Reading from the N-terminus, the 705-residue chain is Ovotransferrin (705 aa).

Residues 1–19 form the signal peptide; sequence MKLILCTVLSLGIAAVCFA. Transferrin-like domains lie at 26-352 and 364-689; these read IRWC…SMRK and IQWC…SLKT. 2 disulfide bridges follow: Cys29/Cys64 and Cys39/Cys55. 2 residues coordinate Fe(3+): Asp79 and Tyr111. Cystine bridges form between Cys134–Cys216, Cys179–Cys193, Cys190–Cys201, and Cys247–Cys261. Hydrogencarbonate contacts are provided by Thr136, Arg140, Ala142, and Gly143. Tyr210 contributes to the Fe(3+) binding site. His269 is a binding site for Fe(3+). Residues 352–360 are connecting region; sequence KDQLTPSPR. 2 disulfides stabilise this stretch: Cys367-Cys399 and Cys377-Cys390. Residues Asp414 and Tyr450 each contribute to the Fe(3+) site. Cystine bridges form between Cys424–Cys699, Cys440–Cys662, Cys473–Cys549, Cys497–Cys690, Cys507–Cys521, Cys518–Cys532, and Cys589–Cys603. Positions 475, 479, 481, and 482 each coordinate hydrogencarbonate. N-linked (GlcNAc...) asparagine glycosylation occurs at Asn492. Position 543 (Tyr543) interacts with Fe(3+). His611 is a binding site for Fe(3+).

This sequence belongs to the transferrin family. As to quaternary structure, monomer. Post-translationally, different forms of hen transferrin are distinguished by their carbohydrate composition. Ovotransferrin and embryo serum transferrin but not adult serum transferrin, have bisecting N-acetylglucosamine. Transferrin secreted by embryo hepatocytes in primary culture is marked by the presence of (alpha1-6) fucosylation of the core N-acetylglucosamine. Serum transferrins also differ in the number of attached neuraminic acid residues. In both embryo forms, sialylation occurs on the Man (alpha 1-3)-linked antennae. In terms of tissue distribution, expressed in the magnum of the oviduct (at protein level).

Its subcellular location is the secreted. Its function is as follows. Transferrins are iron binding transport proteins which can bind two Fe(3+) ions in association with the binding of an anion, usually bicarbonate. Responsible for the transport of iron from sites of absorption and heme degradation to those of storage and utilization. There are two forms of hen transferrin, ovotransferrin, found in the ovoducts and, serum transferrin, secreted by the liver. Serum transferrin may also have a role in stimulating cell proliferation and is regulated by iron levels. Ovotransferrin has a bacteriostatic function and, is not controlled by iron levels. The chain is Ovotransferrin from Gallus gallus (Chicken).